Reading from the N-terminus, the 333-residue chain is Ketol-acid reductoisomerase (NADP(+)) (333 aa).

The KARI N-terminal Rossmann domain maps to 2–182 (ANIYYDDSCD…GGGRAGILET (181 aa)). Residues 25–28 (YGSQ), R48, S51, S53, and 83–86 (DTIQ) contribute to the NADP(+) site. The active site involves H108. Residue G134 participates in NADP(+) binding. The KARI C-terminal knotted domain occupies 183-331 (SFREETETDL…TKLRSMMKWL (149 aa)). Mg(2+) contacts are provided by D191, E195, E227, and E231. Substrate is bound at residue S252.

It belongs to the ketol-acid reductoisomerase family. The cofactor is Mg(2+).

The catalysed reaction is (2R)-2,3-dihydroxy-3-methylbutanoate + NADP(+) = (2S)-2-acetolactate + NADPH + H(+). The enzyme catalyses (2R,3R)-2,3-dihydroxy-3-methylpentanoate + NADP(+) = (S)-2-ethyl-2-hydroxy-3-oxobutanoate + NADPH + H(+). Its pathway is amino-acid biosynthesis; L-isoleucine biosynthesis; L-isoleucine from 2-oxobutanoate: step 2/4. It functions in the pathway amino-acid biosynthesis; L-valine biosynthesis; L-valine from pyruvate: step 2/4. In terms of biological role, involved in the biosynthesis of branched-chain amino acids (BCAA). Catalyzes an alkyl-migration followed by a ketol-acid reduction of (S)-2-acetolactate (S2AL) to yield (R)-2,3-dihydroxy-isovalerate. In the isomerase reaction, S2AL is rearranged via a Mg-dependent methyl migration to produce 3-hydroxy-3-methyl-2-ketobutyrate (HMKB). In the reductase reaction, this 2-ketoacid undergoes a metal-dependent reduction by NADPH to yield (R)-2,3-dihydroxy-isovalerate. This Leptospira biflexa serovar Patoc (strain Patoc 1 / Ames) protein is Ketol-acid reductoisomerase (NADP(+)).